Reading from the N-terminus, the 361-residue chain is POU domain, class 3, transcription factor 4-A (361 aa).

Disordered stretches follow at residues 100 to 131 (HVNHHSPHTNHPNAWGASPAHNSSLTSSGQPI), 150 to 189 (LTPPLPAGTTQSLHPVLREPNDHVDLGSHHCQDHSDEETP), and 333 to 361 (EKRMTPPGDPQQHEVYSHSVKTDTSCNEL). Positions 119-131 (AHNSSLTSSGQPI) are enriched in polar residues. Basic and acidic residues predominate over residues 165 to 183 (VLREPNDHVDLGSHHCQDH). Residues 186–260 (EETPTSDELE…LLNKWLEEAD (75 aa)) form the POU-specific domain. A DNA-binding region (homeobox) is located at residues 278–337 (KRKKRTSIEVSVKGVLETHFLKCPKPAALEITSLADSLQLEKEVVRVWFCNRRQKEKRMT).

This sequence belongs to the POU transcription factor family. Class-3 subfamily. In terms of tissue distribution, from embryonic stage 10, expressed in the Spemann's organizer. During gastrulation, expressed in both the involuting mesoderm and the overlying neuroectoderm. During the neural plate and neural fold stages, expressed in the entire neuroectoderm with expression in discrete regions of the developing nervous system persisting at later stages. Transiently expressed in the pronephros from stages 24-32. In adults, expressed in the kidney and brain.

The protein resides in the nucleus. Its function is as follows. Transcriptional activator. Induces neural-specific gene expression to act as a key regulator of neural differentiation. This Xenopus laevis (African clawed frog) protein is POU domain, class 3, transcription factor 4-A (pou3f4-a).